The sequence spans 380 residues: Carbonic anhydrase 2 (380 aa).

An N-terminal signal peptide occupies residues 1–20 (MARTGALLLAALALAGCAQA). In terms of domain architecture, Alpha-carbonic anhydrase spans 38–322 (DHWDHSLNGE…HHHRRLLHNH (285 aa)). 3 disulfide bridges follow: Cys61/Cys264, Cys194/Cys198, and Cys296/Cys354. N-linked (GlcNAc...) asparagine glycosylation occurs at Asn101. His112 acts as the Proton acceptor in catalysis. The N-linked (GlcNAc...) asparagine glycan is linked to Asn135. The Zn(2+) site is built by His163, His165, and His182. 260–261 (TT) is a binding site for substrate. Asn297 carries N-linked (GlcNAc...) asparagine glycosylation.

The protein belongs to the alpha-carbonic anhydrase family. Tetramer of two large and two small subunits linked by two disulfide bonds. The cofactor is Zn(2+).

The protein localises to the periplasm. The enzyme catalyses hydrogencarbonate + H(+) = CO2 + H2O. In terms of biological role, reversible hydration of carbon dioxide. The chain is Carbonic anhydrase 2 (CAH2) from Chlamydomonas reinhardtii (Chlamydomonas smithii).